The chain runs to 246 residues: MRSGVIARKVGMTRVFTDAGEHVPVTVLQIDQCQVVAHRTTEKDGYVALQVGVGKAKVKNVSQAERGRFAVAKVEPKKKLAEFRVSEDALIPVGAEITADHFIPGQFVDVTGTSTGKGFAGGMKRWNFGGLRATHGVSISHRSIGSTGGRQDPGKTFKNKKMPGHLGVERVTTQNLKVVRTDPERGLILVEGAVPGVAGGWIQVRDSVKRKLPADVPLPGKFRENGSAGASQVEAAPEAPASEENA.

2 disordered regions span residues 140–162 and 215–246; these read SHRSIGSTGGRQDPGKTFKNKKM and DVPLPGKFRENGSAGASQVEAAPEAPASEENA. N5-methylglutamine is present on Gln151. Residues 234–246 are compositionally biased toward low complexity; sequence EAAPEAPASEENA.

It belongs to the universal ribosomal protein uL3 family. In terms of assembly, part of the 50S ribosomal subunit. Forms a cluster with proteins L14 and L19. Methylated by PrmB.

One of the primary rRNA binding proteins, it binds directly near the 3'-end of the 23S rRNA, where it nucleates assembly of the 50S subunit. This is Large ribosomal subunit protein uL3 from Methylorubrum extorquens (strain PA1) (Methylobacterium extorquens).